A 431-amino-acid polypeptide reads, in one-letter code: Probable pectate lyase 1 (431 aa).

The first 20 residues, 1-20 (MAVLPTWLLAMMCLLFFVGA), serve as a signal peptide directing secretion. N-linked (GlcNAc...) asparagine glycosylation is found at Asn23, Asn28, and Asn65. Asp227, Asp251, and Asp255 together coordinate Ca(2+). The active site involves Arg307.

This sequence belongs to the polysaccharide lyase 1 family. The cofactor is Ca(2+). In terms of tissue distribution, expressed in flowers, but not in leaves.

The catalysed reaction is Eliminative cleavage of (1-&gt;4)-alpha-D-galacturonan to give oligosaccharides with 4-deoxy-alpha-D-galact-4-enuronosyl groups at their non-reducing ends.. Its pathway is glycan metabolism; pectin degradation; 2-dehydro-3-deoxy-D-gluconate from pectin: step 2/5. In Arabidopsis thaliana (Mouse-ear cress), this protein is Probable pectate lyase 1.